Consider the following 268-residue polypeptide: Tryptophan synthase alpha chain (268 aa).

Catalysis depends on proton acceptor residues glutamate 49 and aspartate 60.

The protein belongs to the TrpA family. In terms of assembly, tetramer of two alpha and two beta chains.

The enzyme catalyses (1S,2R)-1-C-(indol-3-yl)glycerol 3-phosphate + L-serine = D-glyceraldehyde 3-phosphate + L-tryptophan + H2O. It participates in amino-acid biosynthesis; L-tryptophan biosynthesis; L-tryptophan from chorismate: step 5/5. The alpha subunit is responsible for the aldol cleavage of indoleglycerol phosphate to indole and glyceraldehyde 3-phosphate. This Shigella dysenteriae serotype 1 (strain Sd197) protein is Tryptophan synthase alpha chain.